The sequence spans 436 residues: tRNA(Ile)-lysidine synthase (436 aa).

27–32 (SGGVDS) is an ATP binding site.

It belongs to the tRNA(Ile)-lysidine synthase family.

Its subcellular location is the cytoplasm. It carries out the reaction cytidine(34) in tRNA(Ile2) + L-lysine + ATP = lysidine(34) in tRNA(Ile2) + AMP + diphosphate + H(+). Functionally, ligates lysine onto the cytidine present at position 34 of the AUA codon-specific tRNA(Ile) that contains the anticodon CAU, in an ATP-dependent manner. Cytidine is converted to lysidine, thus changing the amino acid specificity of the tRNA from methionine to isoleucine. The chain is tRNA(Ile)-lysidine synthase from Vibrio vulnificus (strain YJ016).